The chain runs to 507 residues: Glutamyl-tRNA(Gln) amidotransferase subunit A, mitochondrial (507 aa).

Residues 29 to 51 (THPPEPIPPPPPPAPSSSPSPKQ) form a disordered region. A compositionally biased stretch (pro residues) spans 31 to 46 (PPEPIPPPPPPAPSSS). Catalysis depends on charge relay system residues Lys57 and Ser135. Ser159 (acyl-ester intermediate) is an active-site residue.

It belongs to the amidase family. GatA subfamily. As to quaternary structure, subunit of the heterotrimeric GatCAB amidotransferase (AdT) complex, composed of A, B and C subunits.

Its subcellular location is the mitochondrion. It catalyses the reaction L-glutamyl-tRNA(Gln) + L-glutamine + ATP + H2O = L-glutaminyl-tRNA(Gln) + L-glutamate + ADP + phosphate + H(+). Its function is as follows. Allows the formation of correctly charged Gln-tRNA(Gln) through the transamidation of misacylated Glu-tRNA(Gln) in the mitochondria. The reaction takes place in the presence of glutamine and ATP through an activated gamma-phospho-Glu-tRNA(Gln). In Podospora anserina (strain S / ATCC MYA-4624 / DSM 980 / FGSC 10383) (Pleurage anserina), this protein is Glutamyl-tRNA(Gln) amidotransferase subunit A, mitochondrial.